Consider the following 199-residue polypeptide: Probable GTP-binding protein EngB (199 aa).

One can recognise an EngB-type G domain in the interval 21–196; sequence TKPEYAFIGR…LTYIDEINKQ (176 aa). GTP contacts are provided by residues 29–36, 56–60, 74–77, 141–144, and 175–177; these read GRSNVGKS, GKTQL, DLPG, TKID, and TSS. Residues serine 36 and threonine 58 each coordinate Mg(2+).

Belongs to the TRAFAC class TrmE-Era-EngA-EngB-Septin-like GTPase superfamily. EngB GTPase family. It depends on Mg(2+) as a cofactor.

Functionally, necessary for normal cell division and for the maintenance of normal septation. This chain is Probable GTP-binding protein EngB, found in Cytophaga hutchinsonii (strain ATCC 33406 / DSM 1761 / CIP 103989 / NBRC 15051 / NCIMB 9469 / D465).